Consider the following 69-residue polypeptide: Antimicrobial peptide Meucin-18 (69 aa).

The first 16 residues, 1 to 16, serve as a signal peptide directing secretion; that stretch reads MVIFLAYFLVVNESEA. The propeptide occupies 38 to 69; it reads ERSVMNRDLENLFDPYQRNLEMDRLLKQLRNY.

This sequence belongs to the non-disulfide-bridged peptide (NDBP) superfamily. Medium-length antimicrobial peptide (group 3) family. In terms of tissue distribution, expressed by the venom gland.

The protein resides in the secreted. The protein localises to the target cell membrane. Functionally, amphipathic peptide that exhibits extensive cytolytic activities against both prokaryotic and eukaryotic cells. Acts by fastly disrupting the bacterial membrane. Is more potent against Gram-positive bacteria than against Gram-negative bacteria, and fungi (LC=25.1-8.3 uM). Shows potent activity against penicillin (MIC=3.0 uM) and methicillin (MIC=1.5-3.0 uM) resistant bacteria. Is lethal to the fungus Beauveria sp (LC=1.9 uM), a highly lethal pathogenic fungus to insects and resistant to many AMPs. Shows hemolytic activity against rabbit erythrocytes (37.7% of inhibition at 6.25 uM) and cytolysis against rat dorsal root ganglions. May act by disrupting the integrity of the bacterial cell membrane. Antibiotic activity is not affected by major negatively charged components of the prokaryotic cell wall (e.g. lipopolysaccharides and lipoteichoic acid). In vivo, intravenous injection into mice tail provokes uncomfortable symptoms with a death rate of 12.5%. In vivo, in a mouse model of lethal peritonitis, shows potent antibiotic activity without cytotoxicity, improving the survival rate. This chain is Antimicrobial peptide Meucin-18, found in Mesobuthus eupeus (Lesser Asian scorpion).